Reading from the N-terminus, the 402-residue chain is MNITGIITEYNPFHLGHELHLKSSKEITNCDGVICVMSGNFVQRGLPALTDKWTRTKMALEAGVDLVVELPTLFATSSAEFFAFGAVSLLNSLNVVNNICFGSECGDIDLIKKLSEIIINEPPLFKEYLKDYLKEGLPFPKARSKALMKYLDDNNYKIDFSYLEKVLNSSNNILAIEYCKSLYKLQSSIKPFTIQRLGADYNDEKLSKNEIASASAIRKSIYTSNIEESLDFMPEYSYNLLKNTSFSDLDKMFDLVKYAIVSNPNVLKEIPEASEGIDNKIIQNIGKANSLDELINLCKSKRYSYTRLNRILCHVLLNVNKDLLSLRKSSPNYVRILGFNNKGREILKEIKKNSEINIVNKLSKAKSDSLLEFDIKATNIYSFLNPSVKINSDYLISPIIFR.

ATP contacts are provided by residues 7–20 (ITEY…HELH), Gly102, Asn171, and Arg196.

It belongs to the TmcAL family.

The protein resides in the cytoplasm. It catalyses the reaction cytidine(34) in elongator tRNA(Met) + acetate + ATP = N(4)-acetylcytidine(34) in elongator tRNA(Met) + AMP + diphosphate. Functionally, catalyzes the formation of N(4)-acetylcytidine (ac(4)C) at the wobble position of elongator tRNA(Met), using acetate and ATP as substrates. First activates an acetate ion to form acetyladenylate (Ac-AMP) and then transfers the acetyl group to tRNA to form ac(4)C34. In Clostridium perfringens (strain ATCC 13124 / DSM 756 / JCM 1290 / NCIMB 6125 / NCTC 8237 / Type A), this protein is tRNA(Met) cytidine acetate ligase.